The chain runs to 333 residues: DNA-3-methyladenine glycosylase (333 aa).

Positions 1-14 (MPARGGSARPGRGA) are enriched in low complexity. The interval 1–42 (MPARGGSARPGRGALKPVSVTLLPDTEQPPFLGRARRPGNAR) is disordered. 2 positions are modified to phosphoserine: serine 98 and serine 272.

This sequence belongs to the DNA glycosylase MPG family. As to quaternary structure, binds MBD1. Binds SSBP1.

The protein resides in the cytoplasm. It localises to the mitochondrion matrix. It is found in the mitochondrion nucleoid. Its subcellular location is the nucleus. The enzyme catalyses Hydrolysis of alkylated DNA, releasing 3-methyladenine, 3-methylguanine, 7-methylguanine and 7-methyladenine.. With respect to regulation, binding to SSBP1 in mitochondria inhibits glycosylase activity in the context of a single-stranded DNA (ssDNA), but not a double-stranded DNA (dsDNA) substrates. Functionally, hydrolysis of the deoxyribose N-glycosidic bond to excise 3-methyladenine, and 7-methylguanine from the damaged DNA polymer formed by alkylation lesions. In Mus musculus (Mouse), this protein is DNA-3-methyladenine glycosylase (Mpg).